A 966-amino-acid polypeptide reads, in one-letter code: Leucine--tRNA ligase (966 aa).

The 'HIGH' region signature appears at 41 to 51 (PYLNGNLHAGH). The 'KMSKS' region signature appears at 632–636 (KMSKS). Position 635 (lysine 635) interacts with ATP.

It belongs to the class-I aminoacyl-tRNA synthetase family.

The protein resides in the cytoplasm. It catalyses the reaction tRNA(Leu) + L-leucine + ATP = L-leucyl-tRNA(Leu) + AMP + diphosphate. This chain is Leucine--tRNA ligase, found in Methanosarcina mazei (strain ATCC BAA-159 / DSM 3647 / Goe1 / Go1 / JCM 11833 / OCM 88) (Methanosarcina frisia).